The following is a 152-amino-acid chain: D-aminoacyl-tRNA deacylase (152 aa).

The short motif at 142-143 (GP) is the Gly-cisPro motif, important for rejection of L-amino acids element.

This sequence belongs to the DTD family. Homodimer.

Its subcellular location is the cytoplasm. It carries out the reaction glycyl-tRNA(Ala) + H2O = tRNA(Ala) + glycine + H(+). The enzyme catalyses a D-aminoacyl-tRNA + H2O = a tRNA + a D-alpha-amino acid + H(+). Functionally, an aminoacyl-tRNA editing enzyme that deacylates mischarged D-aminoacyl-tRNAs. Also deacylates mischarged glycyl-tRNA(Ala), protecting cells against glycine mischarging by AlaRS. Acts via tRNA-based rather than protein-based catalysis; rejects L-amino acids rather than detecting D-amino acids in the active site. By recycling D-aminoacyl-tRNA to D-amino acids and free tRNA molecules, this enzyme counteracts the toxicity associated with the formation of D-aminoacyl-tRNA entities in vivo and helps enforce protein L-homochirality. This is D-aminoacyl-tRNA deacylase from Burkholderia ambifaria (strain ATCC BAA-244 / DSM 16087 / CCUG 44356 / LMG 19182 / AMMD) (Burkholderia cepacia (strain AMMD)).